A 313-amino-acid chain; its full sequence is Solute carrier family 35 member E3 (313 aa).

The next 9 membrane-spanning stretches (helical) occupy residues 17–37 (GLLF…WIYV), 40–60 (GFPN…GLYI), 71–91 (SLPL…VVFT), 126–146 (FSVR…LNSY), 154–174 (LGMV…VWVG), 187–206 (LLYY…VPFF), 225–245 (LMVL…YWII), 252–272 (TYNM…YILF), and 275–295 (PLSV…LTYT).

The protein belongs to the TPT transporter family. SLC35E subfamily.

The protein resides in the membrane. Functionally, putative transporter. The sequence is that of Solute carrier family 35 member E3 (Slc35e3) from Mus musculus (Mouse).